Consider the following 44-residue polypeptide: Photosystem II reaction center protein J (44 aa).

The chain crosses the membrane as a helical span at residues 12 to 32 (IPLWIVGFVVGSLALGLLGIL).

Belongs to the PsbJ family. As to quaternary structure, PSII is composed of 1 copy each of membrane proteins PsbA, PsbB, PsbC, PsbD, PsbE, PsbF, PsbH, PsbI, PsbJ, PsbK, PsbL, PsbM, PsbT, PsbY, PsbZ, Psb30/Ycf12, at least 3 peripheral proteins of the oxygen-evolving complex and a large number of cofactors. It forms dimeric complexes.

The protein localises to the plastid. The protein resides in the chloroplast thylakoid membrane. Its function is as follows. One of the components of the core complex of photosystem II (PSII). PSII is a light-driven water:plastoquinone oxidoreductase that uses light energy to abstract electrons from H(2)O, generating O(2) and a proton gradient subsequently used for ATP formation. It consists of a core antenna complex that captures photons, and an electron transfer chain that converts photonic excitation into a charge separation. The sequence is that of Photosystem II reaction center protein J from Bigelowiella natans (Pedinomonas minutissima).